Reading from the N-terminus, the 160-residue chain is Cyclic pyranopterin monophosphate synthase (160 aa).

Residues Leu-75–His-77 and Met-113–Glu-114 each bind substrate. The active site involves Asp-128.

This sequence belongs to the MoaC family. In terms of assembly, homohexamer; trimer of dimers.

The enzyme catalyses (8S)-3',8-cyclo-7,8-dihydroguanosine 5'-triphosphate = cyclic pyranopterin phosphate + diphosphate. It functions in the pathway cofactor biosynthesis; molybdopterin biosynthesis. In terms of biological role, catalyzes the conversion of (8S)-3',8-cyclo-7,8-dihydroguanosine 5'-triphosphate to cyclic pyranopterin monophosphate (cPMP). The protein is Cyclic pyranopterin monophosphate synthase of Sodalis glossinidius (strain morsitans).